The following is a 77-amino-acid chain: Acyl carrier protein (77 aa).

Positions 2–77 (ADVLERVTKI…DAVTYIESHL (76 aa)) constitute a Carrier domain. Ser37 carries the O-(pantetheine 4'-phosphoryl)serine modification.

Belongs to the acyl carrier protein (ACP) family. 4'-phosphopantetheine is transferred from CoA to a specific serine of apo-ACP by AcpS. This modification is essential for activity because fatty acids are bound in thioester linkage to the sulfhydryl of the prosthetic group.

Its subcellular location is the cytoplasm. The protein operates within lipid metabolism; fatty acid biosynthesis. In terms of biological role, carrier of the growing fatty acid chain in fatty acid biosynthesis. The polypeptide is Acyl carrier protein (Bacillus anthracis (strain A0248)).